A 255-amino-acid chain; its full sequence is Thiazole synthase (255 aa).

Lys-95 acts as the Schiff-base intermediate with DXP in catalysis. Residues Gly-156, 182–183, and 204–205 each bind 1-deoxy-D-xylulose 5-phosphate; these read AG and NT.

This sequence belongs to the ThiG family. In terms of assembly, homotetramer. Forms heterodimers with either ThiH or ThiS.

The protein localises to the cytoplasm. The enzyme catalyses [ThiS sulfur-carrier protein]-C-terminal-Gly-aminoethanethioate + 2-iminoacetate + 1-deoxy-D-xylulose 5-phosphate = [ThiS sulfur-carrier protein]-C-terminal Gly-Gly + 2-[(2R,5Z)-2-carboxy-4-methylthiazol-5(2H)-ylidene]ethyl phosphate + 2 H2O + H(+). It functions in the pathway cofactor biosynthesis; thiamine diphosphate biosynthesis. Its function is as follows. Catalyzes the rearrangement of 1-deoxy-D-xylulose 5-phosphate (DXP) to produce the thiazole phosphate moiety of thiamine. Sulfur is provided by the thiocarboxylate moiety of the carrier protein ThiS. In vitro, sulfur can be provided by H(2)S. The protein is Thiazole synthase of Photorhabdus laumondii subsp. laumondii (strain DSM 15139 / CIP 105565 / TT01) (Photorhabdus luminescens subsp. laumondii).